The primary structure comprises 207 residues: Thiamine-phosphate synthase (207 aa).

4-amino-2-methyl-5-(diphosphooxymethyl)pyrimidine is bound by residues Gln-37–Lys-41 and Asn-69. Mg(2+) is bound by residues Asp-70 and Asp-89. Residue Ser-108 participates in 4-amino-2-methyl-5-(diphosphooxymethyl)pyrimidine binding. A 2-[(2R,5Z)-2-carboxy-4-methylthiazol-5(2H)-ylidene]ethyl phosphate-binding site is contributed by Thr-134 to Ser-136. Lys-137 is a binding site for 4-amino-2-methyl-5-(diphosphooxymethyl)pyrimidine. 2-[(2R,5Z)-2-carboxy-4-methylthiazol-5(2H)-ylidene]ethyl phosphate-binding positions include Gly-165 and Ile-185–Ser-186.

The protein belongs to the thiamine-phosphate synthase family. It depends on Mg(2+) as a cofactor.

The enzyme catalyses 2-[(2R,5Z)-2-carboxy-4-methylthiazol-5(2H)-ylidene]ethyl phosphate + 4-amino-2-methyl-5-(diphosphooxymethyl)pyrimidine + 2 H(+) = thiamine phosphate + CO2 + diphosphate. The catalysed reaction is 2-(2-carboxy-4-methylthiazol-5-yl)ethyl phosphate + 4-amino-2-methyl-5-(diphosphooxymethyl)pyrimidine + 2 H(+) = thiamine phosphate + CO2 + diphosphate. It catalyses the reaction 4-methyl-5-(2-phosphooxyethyl)-thiazole + 4-amino-2-methyl-5-(diphosphooxymethyl)pyrimidine + H(+) = thiamine phosphate + diphosphate. Its pathway is cofactor biosynthesis; thiamine diphosphate biosynthesis; thiamine phosphate from 4-amino-2-methyl-5-diphosphomethylpyrimidine and 4-methyl-5-(2-phosphoethyl)-thiazole: step 1/1. In terms of biological role, condenses 4-methyl-5-(beta-hydroxyethyl)thiazole monophosphate (THZ-P) and 2-methyl-4-amino-5-hydroxymethyl pyrimidine pyrophosphate (HMP-PP) to form thiamine monophosphate (TMP). This Desulfitobacterium hafniense (strain DSM 10664 / DCB-2) protein is Thiamine-phosphate synthase.